The following is a 415-amino-acid chain: Phosphoribosylamine--glycine ligase (415 aa).

The 204-residue stretch at 108-311 (KKIMEKYNIP…LMQHIIDLDE (204 aa)) folds into the ATP-grasp domain. 134–191 (IENCEFPVVVKKDGLAAGKGVIIADTIEAARSAIEIMYGDEEEGTVVFETFLEGEEFS) provides a ligand contact to ATP. 2 residues coordinate Mg(2+): Glu281 and Asn283.

It belongs to the GARS family. The cofactor is Mg(2+). It depends on Mn(2+) as a cofactor.

The enzyme catalyses 5-phospho-beta-D-ribosylamine + glycine + ATP = N(1)-(5-phospho-beta-D-ribosyl)glycinamide + ADP + phosphate + H(+). It participates in purine metabolism; IMP biosynthesis via de novo pathway; N(1)-(5-phospho-D-ribosyl)glycinamide from 5-phospho-alpha-D-ribose 1-diphosphate: step 2/2. The polypeptide is Phosphoribosylamine--glycine ligase (Staphylococcus aureus (strain MRSA252)).